The chain runs to 352 residues: MTDRIVGAAKREEDELERSLRPQVLSDFVGQARARENLAVFIEAARTRAEALDHVLFAGPPGLGKTTLAQIVARELGVNFRATSGPVISKAGDLAALLTNLEPRDVLFIDEIHRLSPAVEEILYPAMEDFQLDLIIGEGPGARSVRIELAPFTLIGATTRTGLLTTPLRDRFGIPVRLHFYEVAELEGIVRRGASVLGVAMTPDGAHEIARRARGTPRVAGRLLRRVRDFASVEGVKSIDAKAADKALQRLEVDELGLDALDHRYLRCIAVSFSGGPVGVETIAASLSEPRDAIEEIIEPYLIQQGLVNRTPRGRTLTPAAFAHIGVALPAGRSGEPGQARLFDGDEENGSA.

The large ATPase domain (RuvB-L) stretch occupies residues 1–181 (MTDRIVGAAK…FGIPVRLHFY (181 aa)). ATP is bound by residues L20, R21, G62, K65, T66, T67, 128–130 (EDF), R171, Y181, and R218. Residue T66 participates in Mg(2+) binding. Positions 182–252 (EVAELEGIVR…AADKALQRLE (71 aa)) are small ATPAse domain (RuvB-S). A head domain (RuvB-H) region spans residues 255–352 (ELGLDALDHR…FDGDEENGSA (98 aa)). Residues R291, R310, and R315 each coordinate DNA.

Belongs to the RuvB family. As to quaternary structure, homohexamer. Forms an RuvA(8)-RuvB(12)-Holliday junction (HJ) complex. HJ DNA is sandwiched between 2 RuvA tetramers; dsDNA enters through RuvA and exits via RuvB. An RuvB hexamer assembles on each DNA strand where it exits the tetramer. Each RuvB hexamer is contacted by two RuvA subunits (via domain III) on 2 adjacent RuvB subunits; this complex drives branch migration. In the full resolvosome a probable DNA-RuvA(4)-RuvB(12)-RuvC(2) complex forms which resolves the HJ.

It localises to the cytoplasm. It carries out the reaction ATP + H2O = ADP + phosphate + H(+). In terms of biological role, the RuvA-RuvB-RuvC complex processes Holliday junction (HJ) DNA during genetic recombination and DNA repair, while the RuvA-RuvB complex plays an important role in the rescue of blocked DNA replication forks via replication fork reversal (RFR). RuvA specifically binds to HJ cruciform DNA, conferring on it an open structure. The RuvB hexamer acts as an ATP-dependent pump, pulling dsDNA into and through the RuvAB complex. RuvB forms 2 homohexamers on either side of HJ DNA bound by 1 or 2 RuvA tetramers; 4 subunits per hexamer contact DNA at a time. Coordinated motions by a converter formed by DNA-disengaged RuvB subunits stimulates ATP hydrolysis and nucleotide exchange. Immobilization of the converter enables RuvB to convert the ATP-contained energy into a lever motion, pulling 2 nucleotides of DNA out of the RuvA tetramer per ATP hydrolyzed, thus driving DNA branch migration. The RuvB motors rotate together with the DNA substrate, which together with the progressing nucleotide cycle form the mechanistic basis for DNA recombination by continuous HJ branch migration. Branch migration allows RuvC to scan DNA until it finds its consensus sequence, where it cleaves and resolves cruciform DNA. The chain is Holliday junction branch migration complex subunit RuvB from Parvibaculum lavamentivorans (strain DS-1 / DSM 13023 / NCIMB 13966).